The primary structure comprises 158 residues: Rhombotin-2 (158 aa).

LIM zinc-binding domains lie at 30–89 (CGGC…RLFG) and 94–153 (CASC…EWTK).

Interacts via its LIM domains with ELF2 and LDB1. Interacts with BEX2 and KDM5A. Also interacts with basic helix-loop-helix protein TAL1/SCL and can assemble in a complex with LMO2 and TAL1/SCL.

The protein resides in the nucleus. Acts with TAL1/SCL to regulate red blood cell development. Also acts with LDB1 to maintain erythroid precursors in an immature state. This Bos taurus (Bovine) protein is Rhombotin-2 (LMO2).